The sequence spans 79 residues: Putative Fis-like DNA-binding protein (79 aa).

The segment at residues 55 to 74 (QSKASVMLGLNRNTLRKKLI) is a DNA-binding region (H-T-H motif).

This sequence belongs to the transcriptional regulatory Fis family.

The chain is Putative Fis-like DNA-binding protein from Neisseria meningitidis serogroup A / serotype 4A (strain DSM 15465 / Z2491).